Here is a 333-residue protein sequence, read N- to C-terminus: Holliday junction branch migration complex subunit RuvB (333 aa).

Residues 1-182 (MEERMVSAEA…FGVMARLEYY (182 aa)) form a large ATPase domain (RuvB-L) region. ATP contacts are provided by residues I21, R22, G63, K66, T67, T68, 129–131 (EDY), R172, Y182, and R219. T67 provides a ligand contact to Mg(2+). The interval 183–253 (NVEELTTIIE…RAIESLERLQ (71 aa)) is small ATPAse domain (RuvB-S). A head domain (RuvB-H) region spans residues 256–333 (RLGLDHIDHK…EHFNMEVPNK (78 aa)). Residues R311 and R316 each contribute to the DNA site.

Belongs to the RuvB family. Homohexamer. Forms an RuvA(8)-RuvB(12)-Holliday junction (HJ) complex. HJ DNA is sandwiched between 2 RuvA tetramers; dsDNA enters through RuvA and exits via RuvB. An RuvB hexamer assembles on each DNA strand where it exits the tetramer. Each RuvB hexamer is contacted by two RuvA subunits (via domain III) on 2 adjacent RuvB subunits; this complex drives branch migration. In the full resolvosome a probable DNA-RuvA(4)-RuvB(12)-RuvC(2) complex forms which resolves the HJ.

Its subcellular location is the cytoplasm. The enzyme catalyses ATP + H2O = ADP + phosphate + H(+). Its function is as follows. The RuvA-RuvB-RuvC complex processes Holliday junction (HJ) DNA during genetic recombination and DNA repair, while the RuvA-RuvB complex plays an important role in the rescue of blocked DNA replication forks via replication fork reversal (RFR). RuvA specifically binds to HJ cruciform DNA, conferring on it an open structure. The RuvB hexamer acts as an ATP-dependent pump, pulling dsDNA into and through the RuvAB complex. RuvB forms 2 homohexamers on either side of HJ DNA bound by 1 or 2 RuvA tetramers; 4 subunits per hexamer contact DNA at a time. Coordinated motions by a converter formed by DNA-disengaged RuvB subunits stimulates ATP hydrolysis and nucleotide exchange. Immobilization of the converter enables RuvB to convert the ATP-contained energy into a lever motion, pulling 2 nucleotides of DNA out of the RuvA tetramer per ATP hydrolyzed, thus driving DNA branch migration. The RuvB motors rotate together with the DNA substrate, which together with the progressing nucleotide cycle form the mechanistic basis for DNA recombination by continuous HJ branch migration. Branch migration allows RuvC to scan DNA until it finds its consensus sequence, where it cleaves and resolves cruciform DNA. The protein is Holliday junction branch migration complex subunit RuvB of Halalkalibacterium halodurans (strain ATCC BAA-125 / DSM 18197 / FERM 7344 / JCM 9153 / C-125) (Bacillus halodurans).